A 591-amino-acid chain; its full sequence is Putative BTB/POZ domain-containing protein At5g13600 (591 aa).

Residues 28–95 enclose the BTB domain; it reads PDVMIQVVDE…CYGVRIEVTP (68 aa). Residues 208–493 enclose the NPH3 domain; it reads NWWFNDVSSF…VQVLFFEQMR (286 aa). The residue at position 434 (tyrosine 434) is a Phosphotyrosine.

Belongs to the NPH3 family.

It participates in protein modification; protein ubiquitination. Its function is as follows. May act as a substrate-specific adapter of an E3 ubiquitin-protein ligase complex (CUL3-RBX1-BTB) which mediates the ubiquitination and subsequent proteasomal degradation of target proteins. The chain is Putative BTB/POZ domain-containing protein At5g13600 from Arabidopsis thaliana (Mouse-ear cress).